Consider the following 2224-residue polypeptide: Protein sidekick (2224 aa).

Residues 1 to 47 (MLKSAASSLRRRRPKTTITATLAIEMPSQPKLASLLAVLVLLCYCDS) form the signal peptide. Residues 48-2001 (CFFCYADANL…LQHKPFYRQT (1954 aa)) lie on the Extracellular side of the membrane. The Ig-like C2-type 1 domain occupies 72 to 155 (PRFTTHPSSS…SIFSEKSDVV (84 aa)). Cys95 and Cys138 are oxidised to a cystine. Asn164, Asn250, Asn318, and Asn327 each carry an N-linked (GlcNAc...) asparagine glycan. 4 Ig-like C2-type domains span residues 261–355 (PEII…ARLQ), 359–445 (PPLF…NSAS), 455–541 (PIME…AYLS), and 546–636 (TQII…ARLS). Disulfide bonds link Cys283-Cys336 and Cys382-Cys433. N-linked (GlcNAc...) asparagine glycans are attached at residues Asn463, Asn485, and Asn491. 2 disulfides stabilise this stretch: Cys476-Cys525 and Cys567-Cys620. N-linked (GlcNAc...) asparagine glycosylation is found at Asn628, Asn661, Asn707, Asn809, Asn870, Asn942, Asn1019, Asn1094, Asn1109, Asn1172, Asn1203, Asn1282, Asn1329, Asn1379, Asn1414, and Asn1420. Fibronectin type-III domains are found at residues 643–753 (PPSN…LPQE), 758–855 (PPVG…TKEG), 860–967 (PPTN…TMDD), 971–1065 (EVTG…VEPV), 1069–1164 (APTA…TIQA), 1169–1270 (PPFN…TREA), 1275–1372 (GPLD…TFED), 1376–1469 (VPSN…TNNR), 1474–1570 (APSV…TLPA), 1575–1677 (GVGG…VGEA), 1682–1785 (EPRA…TLPG), 1789–1883 (APLH…GPQD), and 1885–1984 (SPVA…TPSK). Residues Asn1843 and Asn1876 are each glycosylated (N-linked (GlcNAc...) asparagine). A helical transmembrane segment spans residues 2002–2022 (WFMVSLAATSIVIIVMVIAVL). At 2023 to 2224 (CVKSKSYKYK…APLPGFSSFV (202 aa)) the chain is on the cytoplasmic side. Disordered stretches follow at residues 2068–2157 (TLNS…RSDP) and 2171–2195 (LRQS…PEGS). Residue Ser2071 is modified to Phosphoserine. The span at 2073–2085 (GTLRSGTLGTLGR) shows a compositional bias: low complexity. Thr2074 carries the post-translational modification Phosphothreonine. 2 stretches are compositionally biased toward basic and acidic residues: residues 2112 to 2122 (HSDEESLKCYD) and 2144 to 2157 (QHSE…RSDP). A phosphoserine mark is found at Ser2113 and Ser2117.

Belongs to the sidekick family.

Its subcellular location is the membrane. Functionally, participates in homotypic or heterotypic interactions in the eye during pattern formation to prevent extra cells from joining the precluster and differentiating as photoreceptor cells. The chain is Protein sidekick from Drosophila melanogaster (Fruit fly).